The chain runs to 763 residues: Amine oxidase [copper-containing] 3 (763 aa).

Residues 2–6 (TQKTT) lie on the Cytoplasmic side of the membrane. Residues 7–27 (LVLLALAVITIFALVCVLLAG) form a helical; Signal-anchor for type II membrane protein membrane-spanning segment. Topologically, residues 28 to 763 (RSGDGGRLSQ…AFSHGGFTYK (736 aa)) are extracellular. The N-linked (GlcNAc...) asparagine glycan is linked to asparagine 137. A disulfide bond links cysteine 198 and cysteine 199. 2 N-linked (GlcNAc...) asparagine glycosylation sites follow: asparagine 232 and asparagine 294. Aspartate 386 acts as the Proton acceptor in catalysis. An intrachain disulfide couples cysteine 404 to cysteine 430. Residue tyrosine 471 is the Schiff-base intermediate with substrate; via topaquinone of the active site. Tyrosine 471 is modified (2',4',5'-topaquinone). Residues histidine 520 and histidine 522 each coordinate Cu(2+). Residues aspartate 529, leucine 530, aspartate 531, and glutamate 572 each coordinate Ca(2+). Residues asparagine 581 and asparagine 592 are each glycosylated (N-linked (GlcNAc...) asparagine). Residues glutamate 641 and phenylalanine 663 each contribute to the Ca(2+) site. Residue asparagine 666 is glycosylated (N-linked (GlcNAc...) asparagine). Residues glutamate 667, aspartate 673, and leucine 674 each contribute to the Ca(2+) site. Histidine 684 contributes to the Cu(2+) binding site. Residues cysteine 734 and cysteine 741 are joined by a disulfide bond.

Belongs to the copper/topaquinone oxidase family. Homodimer; disulfide-linked. Probably forms heterodimers with AOC2. Cu(2+) serves as cofactor. The cofactor is Ca(2+). It depends on L-topaquinone as a cofactor. In terms of processing, topaquinone (TPQ) is generated by copper-dependent autoxidation of a specific tyrosyl residue. N- and O-glycosylated. As to expression, highly expressed in adipocytes, aorta and lung. Expressed at lower levels in heart, kidney, large intestine, liver, small intestine and stomach.

It is found in the cell membrane. The enzyme catalyses methylamine + O2 + H2O = formaldehyde + H2O2 + NH4(+). The catalysed reaction is benzylamine + O2 + H2O = benzaldehyde + H2O2 + NH4(+). It catalyses the reaction 2-phenylethylamine + O2 + H2O = 2-phenylacetaldehyde + H2O2 + NH4(+). In terms of biological role, catalyzes the oxidative deamination of primary amines to the corresponding aldehydes with the concomitant production of hydrogen peroxide and ammonia. Has a preference for the primary monoamines methylamine and benzylamine. Could also act on 2-phenylethylamine but much less efficiently. At endothelial cells surface can also function as a cell adhesion protein that participates in lymphocyte extravasation and recirculation by mediating the binding of lymphocytes to peripheral lymph node vascular endothelial cells in an L-selectin-independent fashion. In Rattus norvegicus (Rat), this protein is Amine oxidase [copper-containing] 3.